The chain runs to 156 residues: Small ribosomal subunit protein uS7 (156 aa).

It belongs to the universal ribosomal protein uS7 family. Part of the 30S ribosomal subunit. Contacts proteins S9 and S11.

One of the primary rRNA binding proteins, it binds directly to 16S rRNA where it nucleates assembly of the head domain of the 30S subunit. Is located at the subunit interface close to the decoding center, probably blocks exit of the E-site tRNA. This Arthrobacter sp. (strain FB24) protein is Small ribosomal subunit protein uS7.